The chain runs to 87 residues: Small ribosomal subunit protein eS21 (87 aa).

Belongs to the eukaryotic ribosomal protein eS21 family. As to quaternary structure, component of the small ribosomal subunit (SSU). Mature N.crassa ribosomes consist of a small (40S) and a large (60S) subunit. The 40S small subunit contains 1 molecule of ribosomal RNA (18S rRNA) and at least 32 different proteins. The large 60S subunit contains 3 rRNA molecules (26S, 5.8S and 5S rRNA) and at least 42 different proteins.

The protein localises to the cytoplasm. Functionally, component of the ribosome, a large ribonucleoprotein complex responsible for the synthesis of proteins in the cell. The small ribosomal subunit (SSU) binds messenger RNAs (mRNAs) and translates the encoded message by selecting cognate aminoacyl-transfer RNA (tRNA) molecules. The large subunit (LSU) contains the ribosomal catalytic site termed the peptidyl transferase center (PTC), which catalyzes the formation of peptide bonds, thereby polymerizing the amino acids delivered by tRNAs into a polypeptide chain. The nascent polypeptides leave the ribosome through a tunnel in the LSU and interact with protein factors that function in enzymatic processing, targeting, and the membrane insertion of nascent chains at the exit of the ribosomal tunnel. The polypeptide is Small ribosomal subunit protein eS21 (crp-7) (Neurospora crassa (strain ATCC 24698 / 74-OR23-1A / CBS 708.71 / DSM 1257 / FGSC 987)).